Consider the following 207-residue polypeptide: Superoxide dismutase [Mn] (207 aa).

Mn(2+)-binding residues include H28, H76, D160, and H164.

The protein belongs to the iron/manganese superoxide dismutase family. Mn(2+) serves as cofactor.

It carries out the reaction 2 superoxide + 2 H(+) = H2O2 + O2. In terms of biological role, destroys superoxide anion radicals which are normally produced within the cells and which are toxic to biological systems. The chain is Superoxide dismutase [Mn] (sodA) from Mycobacterium lepraemurium.